The chain runs to 216 residues: Minor fimbrial subunit HifD (216 aa).

The first 19 residues, 1-19 (MQKTPKKLTALCHQQSTAS), serve as a signal peptide directing secretion. Cys20 carries N-palmitoyl cysteine lipidation. A lipid anchor (S-diacylglycerol cysteine) is attached at Cys20. The interval 159–180 (PINVDGSQANSEKAPDTGKEQN) is disordered.

Belongs to the fimbrial protein family.

It localises to the cell membrane. The protein localises to the fimbrium. May be a minor structural protein required for pilus biogenesis. The sequence is that of Minor fimbrial subunit HifD (hifD) from Haemophilus influenzae.